A 321-amino-acid polypeptide reads, in one-letter code: Mas-related G-protein coupled receptor member H (321 aa).

Residues 1–35 (MEPLATTLCPQECTQTTRNETPNETTWSSEHVTKY) lie on the Extracellular side of the membrane. Asparagine 23 carries an N-linked (GlcNAc...) asparagine glycan. A helical transmembrane segment spans residues 36 to 56 (TYISISLVICSLGLVGNGLLI). Over 57-71 (WFLIFCIKRKPFTIY) the chain is Cytoplasmic. A helical membrane pass occupies residues 72–92 (ILHLAFADFMVLLCSSIIQLV). The Extracellular portion of the chain corresponds to 93-102 (NTFHIYDSTL). Residues 103-126 (VSYAVLFMIFGYNTGLHLLTAISV) form a helical membrane-spanning segment. Residues 127-147 (ERCLSVLYPIWYHCRRPKHQS) are Cytoplasmic-facing. The helical transmembrane segment at 148–168 (TVACTLLWALSVLVSGLENFF) threads the bilayer. Topologically, residues 169–188 (CILEVKPQFPECRYVYIFSC) are extracellular. The chain crosses the membrane as a helical span at residues 189-209 (TLTFLVFVPLMVFSNLILFIQ). Residues 210-225 (VCCNLKPRQPAKLYVI) lie on the Cytoplasmic side of the membrane. Residues 226–246 (IMATVILFLVFAMPMKVLLII) form a helical membrane-spanning segment. Residue glycine 247 is a topological domain, extracellular. The helical transmembrane segment at 248–271 (YYSNSTDASVWKSLPYLNMLSTIN) threads the bilayer. Residues 272–320 (CSINPIVYFVVGSLRRKRSRKSLKEALQKVFEEKPVVASRENEVQFSLP) are Cytoplasmic-facing.

Belongs to the G-protein coupled receptor 1 family. Mas subfamily.

Its subcellular location is the cell membrane. In terms of biological role, orphan receptor. May regulate nociceptor function and/or development, including the sensation or modulation of pain. In Rattus norvegicus (Rat), this protein is Mas-related G-protein coupled receptor member H (Mrgprh).